We begin with the raw amino-acid sequence, 314 residues long: Homoserine kinase (314 aa).

Residue 96 to 106 (PIGSGLGSSAC) coordinates ATP.

This sequence belongs to the GHMP kinase family. Homoserine kinase subfamily.

It is found in the cytoplasm. It carries out the reaction L-homoserine + ATP = O-phospho-L-homoserine + ADP + H(+). Its pathway is amino-acid biosynthesis; L-threonine biosynthesis; L-threonine from L-aspartate: step 4/5. Functionally, catalyzes the ATP-dependent phosphorylation of L-homoserine to L-homoserine phosphate. In Mannheimia succiniciproducens (strain KCTC 0769BP / MBEL55E), this protein is Homoserine kinase.